Consider the following 1011-residue polypeptide: Unconventional myosin ID (1011 aa).

The Myosin motor domain maps to 7–690; that stretch reads AGVQDFVLLD…TLFALEHQRN (684 aa). Residue 100–107 participates in ATP binding; the sequence is GESGAGKT. The interval 567 to 589 is actin-binding; that stretch reads MADLVVTLLKKEPFYVRCIKPND. 2 IQ domains span residues 694–714 and 716–736; these read PHIVTLLQKRVRGWIVRRNFK and MKAAITIVRAYKAYKLRSYVQ. The TH1 domain occupies 806–1007; the sequence is AGRRPYWGQA…EGNIIFEVPA (202 aa).

Belongs to the TRAFAC class myosin-kinesin ATPase superfamily. Myosin family. Binds to F-actin. Interacts with arm. Interacts with shg. Interacts with ds (via intracellular region). In terms of tissue distribution, in the embryo, expressed in gastric caeca, midgut cells of the proventriculus, and in the mid and hindgut. In the larval gut brush border, expression is in the terminal web domain. In the adult gut brush border, expression remains in the web domain and has also moved into the microvilli. Also expressed at low levels in follicle cells during oogenesis.

It is found in the cytoplasm. The protein resides in the cell cortex. Its subcellular location is the cytoskeleton. The protein localises to the cell membrane. It localises to the cell junction. It is found in the adherens junction. The protein resides in the cell projection. In terms of biological role, unconventional myosin that functions as actin-based motor protein with ATPase activity. Binds to membranes enriched in phosphatidylinositol 4-5-bisphosphate, and can glide along actin filaments when anchored to a lipid bilayer. Generates left-right asymmetry at the level of single cells, organs and the whole body via its interaction with the actin cytoskeleton, both in the embryo and the adult. Normal left-right asymmetry of the larval midgut and hindgut requires expression in the embryonic hindgut epithelium during a critical time period, 10 to 12.75 hours after egg laying. This period corresponds to a late stage of germband retraction, and precedes left-right asymmetric morphogenesis. Expression in segment H1 of the imaginal ring is required at 0 to 24 hours after pupation for changes of cell shape and orientation in the H2 segment, which then gives rise to normal, dextral looping of the adult hindgut. Required during a critical period, 126-132 hours after egg laying, for normal, dextral rotation of the adult male genitalia. Has a double role by promoting dextral rotation in the posterior compartment of segment A8 of the male genital disk, and in repressing sinistral looping in the anterior compartment. This is Unconventional myosin ID from Drosophila melanogaster (Fruit fly).